Reading from the N-terminus, the 300-residue chain is N-acetylmuramic acid 6-phosphate etherase (300 aa).

Residues 55–217 enclose the SIS domain; sequence IAERLRAGGR…STGAMIRLGK (163 aa). Glu-83 functions as the Proton donor in the catalytic mechanism. Glu-114 is an active-site residue.

Belongs to the GCKR-like family. MurNAc-6-P etherase subfamily. Homodimer.

It catalyses the reaction N-acetyl-D-muramate 6-phosphate + H2O = N-acetyl-D-glucosamine 6-phosphate + (R)-lactate. The protein operates within amino-sugar metabolism; N-acetylmuramate degradation. Functionally, specifically catalyzes the cleavage of the D-lactyl ether substituent of MurNAc 6-phosphate, producing GlcNAc 6-phosphate and D-lactate. The chain is N-acetylmuramic acid 6-phosphate etherase from Symbiobacterium thermophilum (strain DSM 24528 / JCM 14929 / IAM 14863 / T).